We begin with the raw amino-acid sequence, 69 residues long: Neurotoxin Cex5 (69 aa).

Residue A1 is a signal peptide. One can recognise an LCN-type CS-alpha/beta domain in the interval 2-67 (KDGYLVSKST…TYPIPGKSCG (66 aa)). Cystine bridges form between C13-C66, C17-C42, C26-C47, and C30-C49. C66 carries the post-translational modification Cysteine amide. Residues 67–69 (GKK) constitute a propeptide that is removed on maturation.

Belongs to the long (4 C-C) scorpion toxin superfamily. Sodium channel inhibitor family. Beta subfamily. As to expression, expressed by the venom gland.

The protein resides in the secreted. Its function is as follows. Beta toxins bind voltage-independently at site-4 of sodium channels (Nav) and shift the voltage of activation toward more negative potentials thereby affecting sodium channel activation and promoting spontaneous and repetitive firing. This Centruroides exilicauda (Bark scorpion) protein is Neurotoxin Cex5.